A 134-amino-acid polypeptide reads, in one-letter code: Pre-histone-like nucleoprotein (134 aa).

Positions 2–23 (AILISPTNNTGWGLGTHKLFGG) are excised as a propeptide. The tract at residues 40-62 (RASWGSKGRRRRQGRARGAPLDP) is disordered. The Nuclear localization signal motif lies at 125-134 (KRKRRVRFRQ).

Belongs to the adenoviridae histone-like nucleoprotein family. As to quaternary structure, interacts with the core-capsid bridging protein; this interaction bridges the virus core to the capsid. Interacts with host NPM1; this interaction might play a role in placing the pre-histone-like nucleoprotein on the viral DNA or regulating viral gene expression. Interacts with host HMGB1; this interaction inhibits host immune response. Cleaved near the N-terminus by the viral protease during virion maturation to form the mature protein.

Its subcellular location is the virion. It localises to the host nucleus. The protein resides in the host nucleolus. Plays a role in the inhibition of host immune response within the nucleus. Interacts with cellular nucleosomes and immobilizes the host immune danger signal HMGB1 on chromatin. In turn, prevents HMGB1 release out of the cell and thus decreases inflammation. Also plays a role in the wrapping and condensation of the viral DNA. May also promote viral genome import into the nucleus. The polypeptide is Pre-histone-like nucleoprotein (Canis lupus familiaris (Dog)).